Consider the following 150-residue polypeptide: MENKPKPSRILGIDFGMSRIGLAQSDERKIIAMPLITVHTEKKSEQTVIKLLETISQLCETQKCEIEEIVIGLPLMMSGRTGFLADEVKHFAQLLQQLTPIPIRLWDERLTTVQAERSLRESQLTRKKRSKVVDIVSASIILQSYLDSRC.

It belongs to the YqgF nuclease family.

It is found in the cytoplasm. Its function is as follows. Could be a nuclease involved in processing of the 5'-end of pre-16S rRNA. The sequence is that of Putative pre-16S rRNA nuclease from Protochlamydia amoebophila (strain UWE25).